Consider the following 363-residue polypeptide: Probable tRNA pseudouridine synthase D (363 aa).

Aspartate 82 serves as the catalytic Nucleophile. Residues 151–363 (YLPAYIGYQR…IARTDPRLFT (213 aa)) enclose the TRUD domain.

The protein belongs to the pseudouridine synthase TruD family.

It catalyses the reaction uridine(13) in tRNA = pseudouridine(13) in tRNA. Its function is as follows. Could be responsible for synthesis of pseudouridine from uracil-13 in transfer RNAs. In Sulfurisphaera tokodaii (strain DSM 16993 / JCM 10545 / NBRC 100140 / 7) (Sulfolobus tokodaii), this protein is Probable tRNA pseudouridine synthase D.